A 309-amino-acid chain; its full sequence is Carbonic anhydrase 4 (309 aa).

Residues 1-17 form the signal peptide; that stretch reads MQLLLALLALAYVAPST. The 263-residue stretch at 20 to 282 folds into the Alpha-carbonic anhydrase domain; that stretch reads SHWCYEIQAK…LGNRQVFRSH (263 aa). 2 disulfides stabilise this stretch: Cys-23/Cys-35 and Cys-45/Cys-226. His-87 functions as the Proton donor/acceptor in the catalytic mechanism. Residues His-114, His-116, and His-139 each contribute to the Zn(2+) site. An N-linked (GlcNAc...) asparagine glycan is attached at Asn-193. A substrate-binding site is contributed by 222 to 223; the sequence is TT. A lipid anchor (GPI-anchor amidated serine) is attached at Ser-281. A propeptide spans 282–309 (removed in mature form); the sequence is HASGRLLSLPLPTLLVPTLTCLVASFLH.

Belongs to the alpha-carbonic anhydrase family. In terms of assembly, interacts with SLC4A4. Requires Zn(2+) as cofactor. Post-translationally, the N-terminus is blocked. In terms of processing, glycosylated. As to expression, present in kidney and lung. Also particularly abundant in brain, muscle, heart and liver. Not detected in skin or spleen.

It is found in the cell membrane. It catalyses the reaction hydrogencarbonate + H(+) = CO2 + H2O. Inhibited by acetazolamide. Its function is as follows. Catalyzes the reversible hydration of carbon dioxide into bicarbonate and protons and thus is essential to maintaining intracellular and extracellular pH. May stimulate the sodium/bicarbonate transporter activity of SLC4A4 that acts in pH homeostasis. It is essential for acid overload removal from the retina and retina epithelium, and acid release in the choriocapillaris in the choroid. This chain is Carbonic anhydrase 4 (Ca4), found in Rattus norvegicus (Rat).